We begin with the raw amino-acid sequence, 257 residues long: Acetylglutamate kinase (257 aa).

Substrate is bound by residues 41–42 (GG), Arg-63, and Asn-156.

Belongs to the acetylglutamate kinase family. ArgB subfamily.

Its subcellular location is the cytoplasm. The enzyme catalyses N-acetyl-L-glutamate + ATP = N-acetyl-L-glutamyl 5-phosphate + ADP. It functions in the pathway amino-acid biosynthesis; L-arginine biosynthesis; N(2)-acetyl-L-ornithine from L-glutamate: step 2/4. Functionally, catalyzes the ATP-dependent phosphorylation of N-acetyl-L-glutamate. In Geobacillus sp. (strain WCH70), this protein is Acetylglutamate kinase.